The sequence spans 130 residues: Small ribosomal subunit protein uS8 (130 aa).

This sequence belongs to the universal ribosomal protein uS8 family. In terms of assembly, part of the 30S ribosomal subunit. Contacts proteins S5 and S12.

One of the primary rRNA binding proteins, it binds directly to 16S rRNA central domain where it helps coordinate assembly of the platform of the 30S subunit. In Pseudomonas syringae pv. tomato (strain ATCC BAA-871 / DC3000), this protein is Small ribosomal subunit protein uS8.